A 397-amino-acid polypeptide reads, in one-letter code: MSPPLDSALEPLSEYKETAFPRTEKDPSQYKEHDLVTPEKEIQTGYFSPRGSHSSHGSHDSSASSNISLDDARMSDVNNSPNVFHDDPDTIDEKLSMYWKAANETVIREPYDYIAGIPGKEIRRKLLEAFNHWYKVDEQSCQAIATTVGMAHNASLLIDDIQDSSKLRRGVPCAHEVFGIAQTINSANYVYFLAQNQLFRLRSWPQAISVFNEEMVNLHRGQGMELFWRDNLLPPSMDDYLQMIANKTGGLFRMIVRLLQTSSRQVIDVEQLVDVLGLYFQILDDYKNIREEKMAAQKGFFEDLTEGKFSFPICHAIGEGAKNRTALLHMLRLKTDDMKIKQEAVCILDNAGSLDYTREVLYGLDRKARSLLREFKTPNPFMEALLDAMLSSLQACH.

The segment at 1–67 is disordered; that stretch reads MSPPLDSALE…SHDSSASSNI (67 aa). The span at 13–42 shows a compositional bias: basic and acidic residues; that stretch reads SEYKETAFPRTEKDPSQYKEHDLVTPEKEI. Low complexity predominate over residues 52–67; that stretch reads SHSSHGSHDSSASSNI. Residues Lys-120, Arg-123, and His-152 each coordinate isopentenyl diphosphate. Mg(2+)-binding residues include Asp-159 and Asp-163. Arg-168 is a dimethylallyl diphosphate binding site. Residue Arg-169 participates in isopentenyl diphosphate binding. Residues Lys-247, Thr-248, and Gln-281 each coordinate dimethylallyl diphosphate. Residue Asp-284 coordinates Mg(2+). Asn-288, Lys-298, and Lys-308 together coordinate dimethylallyl diphosphate.

Belongs to the FPP/GGPP synthase family. The cofactor is Mg(2+).

It carries out the reaction isopentenyl diphosphate + dimethylallyl diphosphate = (2E)-geranyl diphosphate + diphosphate. The catalysed reaction is isopentenyl diphosphate + (2E)-geranyl diphosphate = (2E,6E)-farnesyl diphosphate + diphosphate. It catalyses the reaction isopentenyl diphosphate + (2E,6E)-farnesyl diphosphate = (2E,6E,10E)-geranylgeranyl diphosphate + diphosphate. Its pathway is secondary metabolite biosynthesis; terpenoid biosynthesis. Its function is as follows. Geranylgeranyl pyrophosphate synthase; part of the gene cluster that mediates the biosynthesis of the diterpene ent-pimara-8(14),15-diene (PD). Within the cluster, the HMG-CoA reductase AN1593 functions in the mevalonate pathway, which produces isoprenoid precursors. The geranylgeranyl pyrophosphate (GGPP) synthase AN1592 is needed in the formation of GGPP, the precursor for diterpenes. Lastly, the pimaradiene synthase pbcA performs the 2 cyclization steps that convert GGPP to ent-pimara-8(14),15-diene. The putative roles of the remaining cluster enzymes in ent-pimara-8(14),15-diene biosynthesis is unclear. The cytochrome P450 monooxygenase AN1598, the glutathione S-transferase AN1595, the oxidoreductases AN1596 and AN1597 probably function as decorative enzymes. It is possible that in biological conditions the compound is oxidized to ent-pimara-8(14),15-dien-19-oic acid, which is a bioactive diterpene compound predominant in many plant extracts. This chain is Geranylgeranyl pyrophosphate synthase AN1592, found in Emericella nidulans (strain FGSC A4 / ATCC 38163 / CBS 112.46 / NRRL 194 / M139) (Aspergillus nidulans).